The primary structure comprises 62 residues: UPF0291 protein CLK_1994 (62 aa).

It belongs to the UPF0291 family.

Its subcellular location is the cytoplasm. The polypeptide is UPF0291 protein CLK_1994 (Clostridium botulinum (strain Loch Maree / Type A3)).